A 464-amino-acid chain; its full sequence is Keratin, type I cytoskeletal 28 (464 aa).

The head stretch occupies residues Met1 to Asn85. Positions Glu86–Trp121 are coil 1A. The 316-residue stretch at Glu86–Cys401 folds into the IF rod domain. Residues Tyr122–Thr143 form a linker 1 region. Residues Ile144 to Leu235 form a coil 1B region. Positions Gln236 to Leu258 are linker 12. The coil 2 stretch occupies residues Leu259–Asp397. The tract at residues Arg398–Phe464 is tail. The span at Ser402–Lys417 shows a compositional bias: low complexity. 2 disordered regions span residues Ser402–Thr422 and Ser440–Phe464.

The protein belongs to the intermediate filament family. As to quaternary structure, heterotetramer of two type I and two type II keratins.

It is found in the cytoplasm. Its function is as follows. Essential for the proper assembly of types I and II keratin protein complexes and the formation of keratin intermediate filaments in the inner root sheath (irs). The protein is Keratin, type I cytoskeletal 28 of Bos taurus (Bovine).